The primary structure comprises 469 residues: Spliceosome-associated protein CWC27 homolog (469 aa).

Serine 2 is subject to N-acetylserine. The region spanning 11 to 166 (TNGKVLLKTT…NPHRIKSCEV (156 aa)) is the PPIase cyclophilin-type domain. Basic and acidic residues predominate over residues 175–193 (TPREIKKPKNEKPEEEVKK). 2 disordered regions span residues 175–415 (TPRE…DDEG) and 428–469 (RKVK…KERR). Positions 206 to 229 (SFGEEAEEEEEEVNRVSQSMKGRS) form a coiled coil. The segment covering 231-241 (SSHDLLKDDPH) has biased composition (basic and acidic residues). The segment covering 256 to 278 (TGDLEDDGEDDSAERDEYMEDDE) has biased composition (acidic residues). 2 stretches are compositionally biased toward basic and acidic residues: residues 302 to 341 (GDGEKKPASRSEELRKEARQLKRELLAAKQKKETAIKVEE) and 356 to 368 (EYRREKQKYEALR). Residues 309–371 (ASRSEELRKE…QKYEALRKQQ (63 aa)) adopt a coiled-coil conformation. The span at 384 to 403 (ALLSQFKSKLTQAITETPEN) shows a compositional bias: polar residues. Positions 454–469 (RREESKKLLREKKERR) are enriched in basic and acidic residues.

It belongs to the cyclophilin-type PPIase family. As to quaternary structure, part of the activated spliceosome B/catalytic step 1 spliceosome, one of the forms of the spliceosome which has a well-formed active site but still cannot catalyze the branching reaction and is composed at least of 52 proteins, the U2, U5 and U6 snRNAs and the pre-mRNA. Recruited during early steps of activated spliceosome B maturation, it is probably one of the first proteins released from this complex as he matures to the spliceosome C complex. Component of the minor spliceosome, which splices U12-type introns.

It localises to the nucleus. As part of the spliceosome, plays a role in pre-mRNA splicing. Probable inactive PPIase with no peptidyl-prolyl cis-trans isomerase activity. As a component of the minor spliceosome, involved in the splicing of U12-type introns in pre-mRNAs. The polypeptide is Spliceosome-associated protein CWC27 homolog (Mus musculus (Mouse)).